Consider the following 226-residue polypeptide: Cytidylate kinase (226 aa).

Residue 12–20 (GPSGAGKGT) coordinates ATP.

The protein belongs to the cytidylate kinase family. Type 1 subfamily.

It localises to the cytoplasm. It carries out the reaction CMP + ATP = CDP + ADP. It catalyses the reaction dCMP + ATP = dCDP + ADP. This Xanthomonas campestris pv. campestris (strain B100) protein is Cytidylate kinase.